A 350-amino-acid polypeptide reads, in one-letter code: 2,5-dihydroxypyridine 5,6-dioxygenase (350 aa).

Fe cation-binding residues include histidine 265, histidine 318, and aspartate 320.

It depends on Fe(2+) as a cofactor.

It carries out the reaction 2,5-dihydroxypyridine + O2 = N-formylmaleamate + H(+). Its pathway is cofactor degradation; nicotinate degradation. Functionally, catalyzes the dioxygenolytic ring cleavage of 2,5-dihydroxypyridine between carbons 5 and 6 generating N-formylmaleamate in the aerobic nicotinate degradation pathway. The protein is 2,5-dihydroxypyridine 5,6-dioxygenase (nicX) of Pseudomonas putida (strain ATCC 47054 / DSM 6125 / CFBP 8728 / NCIMB 11950 / KT2440).